We begin with the raw amino-acid sequence, 298 residues long: H-2 class I histocompatibility antigen, alpha chain (298 aa).

The Extracellular portion of the chain corresponds to 1–244 (RYEPRARWIE…EPPSSTKTNT (244 aa)). An N-linked (GlcNAc...) asparagine glycan is attached at N43. An intrachain disulfide couples C58 to C121. N133 carries an N-linked (GlcNAc...) asparagine glycan. The Ig-like C1-type domain occupies 142 to 230 (PKAHVTHHRR…EGLPEPLTLR (89 aa)). Cysteines 160 and 216 form a disulfide. The chain crosses the membrane as a helical span at residues 245-265 (VIIAVPVVLGAVVILGAVMAF). Over 266 to 298 (VMKRRRNTGGKGGDYALAPVSQSSDMSLPDCKV) the chain is Cytoplasmic. The interval 277 to 298 (GGDYALAPVSQSSDMSLPDCKV) is disordered. Phosphoserine occurs at positions 289 and 292.

This sequence belongs to the MHC class I family. In terms of assembly, heterodimer of an alpha chain and a beta chain (beta-2-microglobulin).

The protein localises to the membrane. Its function is as follows. Involved in the presentation of foreign antigens to the immune system. The sequence is that of H-2 class I histocompatibility antigen, alpha chain (H2-D1) from Mus musculus (Mouse).